A 290-amino-acid polypeptide reads, in one-letter code: Undecaprenyl-diphosphatase (290 aa).

8 consecutive transmembrane segments (helical) span residues 1–21 (MFLL…LTEF), 48–68 (SAFT…AWVF), 101–121 (IHVL…DDLI), 125–145 (LFSV…MIIA), 161–181 (INYF…WPGF), 202–222 (SDFT…LSLL), 231–251 (AHIP…LIAI), and 266–286 (FAIY…GFGI).

It belongs to the UppP family.

The protein resides in the cell membrane. The enzyme catalyses di-trans,octa-cis-undecaprenyl diphosphate + H2O = di-trans,octa-cis-undecaprenyl phosphate + phosphate + H(+). In terms of biological role, catalyzes the dephosphorylation of undecaprenyl diphosphate (UPP). Confers resistance to bacitracin. The protein is Undecaprenyl-diphosphatase of Staphylococcus epidermidis (strain ATCC 35984 / DSM 28319 / BCRC 17069 / CCUG 31568 / BM 3577 / RP62A).